We begin with the raw amino-acid sequence, 491 residues long: UDP-N-acetylmuramate--L-alanine ligase (491 aa).

126 to 132 (GTHGKTT) is a binding site for ATP.

This sequence belongs to the MurCDEF family.

Its subcellular location is the cytoplasm. It catalyses the reaction UDP-N-acetyl-alpha-D-muramate + L-alanine + ATP = UDP-N-acetyl-alpha-D-muramoyl-L-alanine + ADP + phosphate + H(+). Its pathway is cell wall biogenesis; peptidoglycan biosynthesis. In terms of biological role, cell wall formation. This chain is UDP-N-acetylmuramate--L-alanine ligase, found in Escherichia coli (strain K12 / MC4100 / BW2952).